The primary structure comprises 579 residues: CTP synthase (579 aa).

Residues 1–281 form an amidoligase domain region; sequence MPALRKHPQT…DAYVVRRLNL (281 aa). Ser-23 contacts CTP. Ser-23 provides a ligand contact to UTP. ATP is bound by residues 24–29 and Asp-81; that span reads SLGKGL. Mg(2+) contacts are provided by Asp-81 and Glu-155. CTP-binding positions include 162–164, 202–207, and Lys-238; these read DIE and KTKPTQ. Residues 202-207 and Lys-238 contribute to the UTP site; that span reads KTKPTQ. Positions 306 to 554 constitute a Glutamine amidotransferase type-1 domain; that stretch reads RIALVGKYID…IGAALDYKAA (249 aa). An L-glutamine-binding site is contributed by Gly-369. Cys-396 serves as the catalytic Nucleophile; for glutamine hydrolysis. L-glutamine-binding positions include 397 to 400, Glu-419, and Arg-480; that span reads LGLQ. Residues His-527 and Glu-529 contribute to the active site.

The protein belongs to the CTP synthase family. As to quaternary structure, homotetramer.

It carries out the reaction UTP + L-glutamine + ATP + H2O = CTP + L-glutamate + ADP + phosphate + 2 H(+). The enzyme catalyses L-glutamine + H2O = L-glutamate + NH4(+). The catalysed reaction is UTP + NH4(+) + ATP = CTP + ADP + phosphate + 2 H(+). It participates in pyrimidine metabolism; CTP biosynthesis via de novo pathway; CTP from UDP: step 2/2. With respect to regulation, allosterically activated by GTP, when glutamine is the substrate; GTP has no effect on the reaction when ammonia is the substrate. The allosteric effector GTP functions by stabilizing the protein conformation that binds the tetrahedral intermediate(s) formed during glutamine hydrolysis. Inhibited by the product CTP, via allosteric rather than competitive inhibition. Functionally, catalyzes the ATP-dependent amination of UTP to CTP with either L-glutamine or ammonia as the source of nitrogen. Regulates intracellular CTP levels through interactions with the four ribonucleotide triphosphates. In Mycobacterium sp. (strain KMS), this protein is CTP synthase.